The sequence spans 95 residues: Co-chaperonin GroES (95 aa).

This sequence belongs to the GroES chaperonin family. As to quaternary structure, heptamer of 7 subunits arranged in a ring. Interacts with the chaperonin GroEL.

The protein resides in the cytoplasm. Together with the chaperonin GroEL, plays an essential role in assisting protein folding. The GroEL-GroES system forms a nano-cage that allows encapsulation of the non-native substrate proteins and provides a physical environment optimized to promote and accelerate protein folding. GroES binds to the apical surface of the GroEL ring, thereby capping the opening of the GroEL channel. The polypeptide is Co-chaperonin GroES (Ruegeria pomeroyi (strain ATCC 700808 / DSM 15171 / DSS-3) (Silicibacter pomeroyi)).